A 143-amino-acid polypeptide reads, in one-letter code: Large ribosomal subunit protein uL16 (143 aa).

The segment covering 1–17 has biased composition (basic residues); sequence MLQPKRTKFRKAHKGRI. The interval 1–21 is disordered; that stretch reads MLQPKRTKFRKAHKGRIHGNA.

The protein belongs to the universal ribosomal protein uL16 family. In terms of assembly, part of the 50S ribosomal subunit.

Functionally, binds 23S rRNA and is also seen to make contacts with the A and possibly P site tRNAs. This is Large ribosomal subunit protein uL16 from Rhizorhabdus wittichii (strain DSM 6014 / CCUG 31198 / JCM 15750 / NBRC 105917 / EY 4224 / RW1) (Sphingomonas wittichii).